The chain runs to 330 residues: Carbonic anhydrase (330 aa).

Residues methionine 1–alanine 109 form a chloroplast transit peptide-like region.

This sequence belongs to the beta-class carbonic anhydrase family.

The protein localises to the cytoplasm. The enzyme catalyses hydrogencarbonate + H(+) = CO2 + H2O. Functionally, reversible hydration of carbon dioxide. This is Carbonic anhydrase from Flaveria bidentis (Coastal plain yellowtops).